A 219-amino-acid chain; its full sequence is Uracil-DNA glycosylase (219 aa).

The active-site Proton acceptor is the aspartate 59.

Belongs to the uracil-DNA glycosylase (UDG) superfamily. UNG family.

It localises to the cytoplasm. It carries out the reaction Hydrolyzes single-stranded DNA or mismatched double-stranded DNA and polynucleotides, releasing free uracil.. Excises uracil residues from the DNA which can arise as a result of misincorporation of dUMP residues by DNA polymerase or due to deamination of cytosine. This is Uracil-DNA glycosylase from Staphylococcus haemolyticus (strain JCSC1435).